A 308-amino-acid polypeptide reads, in one-letter code: MASLKDLRDRIASVKATQKITKAMQMVAAARLHRAQEAAQSARPYAKRMADILTSVAADVDGVDAPALMRGTGRDDVHLLVVCTAERGLCGAFNVQIARRAREQIKALLAAGKIVKIITVGKKGADILSRDYKSLMIDHIDLHAVKRIGFAEALVISQRIVDLFNEGAFDVCTLFYSEFVSVINQRPTAFGLIPMGAPKAAVEATDVVEQKETSKDSQSIVHEAIVYEYEPDAASLLEALVPRNLSVQIFRALLENVAGEMGAKMTAMDNASRNAGEMINKLTVAYNRQRQAQITTELIEIIAGAEAL.

The protein belongs to the ATPase gamma chain family. As to quaternary structure, F-type ATPases have 2 components, CF(1) - the catalytic core - and CF(0) - the membrane proton channel. CF(1) has five subunits: alpha(3), beta(3), gamma(1), delta(1), epsilon(1). CF(0) has three main subunits: a, b and c.

It localises to the cell inner membrane. Produces ATP from ADP in the presence of a proton gradient across the membrane. The gamma chain is believed to be important in regulating ATPase activity and the flow of protons through the CF(0) complex. The sequence is that of ATP synthase gamma chain from Bartonella tribocorum (strain CIP 105476 / IBS 506).